Consider the following 413-residue polypeptide: Serine hydroxymethyltransferase (413 aa).

(6S)-5,6,7,8-tetrahydrofolate contacts are provided by residues leucine 120 and 124–126 (GHL). Lysine 228 carries the post-translational modification N6-(pyridoxal phosphate)lysine.

The protein belongs to the SHMT family. As to quaternary structure, homodimer. Pyridoxal 5'-phosphate is required as a cofactor.

It is found in the cytoplasm. It carries out the reaction (6R)-5,10-methylene-5,6,7,8-tetrahydrofolate + glycine + H2O = (6S)-5,6,7,8-tetrahydrofolate + L-serine. It functions in the pathway one-carbon metabolism; tetrahydrofolate interconversion. Its pathway is amino-acid biosynthesis; glycine biosynthesis; glycine from L-serine: step 1/1. Functionally, catalyzes the reversible interconversion of serine and glycine with tetrahydrofolate (THF) serving as the one-carbon carrier. This reaction serves as the major source of one-carbon groups required for the biosynthesis of purines, thymidylate, methionine, and other important biomolecules. Also exhibits THF-independent aldolase activity toward beta-hydroxyamino acids, producing glycine and aldehydes, via a retro-aldol mechanism. The sequence is that of Serine hydroxymethyltransferase from Agathobacter rectalis (strain ATCC 33656 / DSM 3377 / JCM 17463 / KCTC 5835 / VPI 0990) (Eubacterium rectale).